An 881-amino-acid chain; its full sequence is Sodium/potassium/calcium exchanger Nckx30C (881 aa).

Residues 1–194 (MLQPTTCSKQ…SRCRSRRCLR (194 aa)) lie on the Extracellular side of the membrane. N-linked (GlcNAc...) asparagine glycosylation is present at Asn-69. 4 disordered regions span residues 79-111 (DMLS…APSD), 149-181 (AKTR…LLHP), 215-255 (AAKP…TSGE), and 272-315 (GLEE…TTKT). The segment covering 85-95 (RSRSSSTTIDF) has biased composition (polar residues). Residues 149-175 (AKTRSRTAAQLPATSAASATSSRGASA) are compositionally biased toward low complexity. Residues 195-215 (LPIYSILLLCLTTQGLGLGDA) form a helical membrane-spanning segment. Residues 216–330 (AKPRPAKQHF…DLFTKEQLEN (115 aa)) are Cytoplasmic-facing. The span at 228-240 (SNSNSPNQNQNHN) shows a compositional bias: low complexity. A compositionally biased stretch (polar residues) spans 296 to 315 (AGNQRGINDTHNDNSTTTKT). The helical transmembrane segment at 331 to 351 (GAVILHIIGVIYMFVALAIVC) threads the bilayer. The Extracellular portion of the chain corresponds to 352 to 375 (DEFFVPSLDVIIEKLGITDDVAGA). One copy of the Alpha-1 repeat lies at 372–412 (VAGATFMAAGGSAPELFTSVIGVFVSFDDVGIGTIVGSAVF). Residues 376 to 396 (TFMAAGGSAPELFTSVIGVFV) form a helical membrane-spanning segment. Residues 397-402 (SFDDVG) are Cytoplasmic-facing. Residues 403-423 (IGTIVGSAVFNILFVIGMCAL) form a helical membrane-spanning segment. The Extracellular portion of the chain corresponds to 424–433 (FSKTVLSLTW). The chain crosses the membrane as a helical span at residues 434 to 454 (WPLFRDCSFYSISLLVLIYFF). The Cytoplasmic portion of the chain corresponds to 455 to 458 (RDNR). A helical transmembrane segment spans residues 459–479 (IFWWEALILFTIYIGYVAFMK). The Extracellular segment spans residues 480-720 (WNVQVETCVK…PDTRTPRGKR (241 aa)). A disordered region spans residues 508-565 (PAGNAANSSETSMATQPGGSVTSRAASETRSGPPGSSNAGATGNSSGGGGTSGSTQTG). Positions 512 to 537 (AANSSETSMATQPGGSVTSRAASETR) are enriched in polar residues. Residues Asn-514 and Asn-551 are each glycosylated (N-linked (GlcNAc...) asparagine). A compositionally biased stretch (low complexity) spans 542–551 (GSSNAGATGN). Residues 721–741 (FFPVTFIGSIVWIAAFSYLMV) form a helical membrane-spanning segment. At 742-756 (WWANVAGDTARIPPE) the chain is on the cytoplasmic side. The chain crosses the membrane as a helical span at residues 757–777 (VMGLTFLAAGTSIPDLITSVI). One copy of the Alpha-2 repeat lies at 764-795 (AAGTSIPDLITSVIVARKGFGDMAVSSSVGSN). Over 778–795 (VARKGFGDMAVSSSVGSN) the chain is Extracellular. The chain crosses the membrane as a helical span at residues 796–816 (IFDVTVGLPIPWLLYGIIYGA). The Cytoplasmic segment spans residues 817-822 (PVEVNS). Residues 823–843 (VGMVCSITILFMMLVFVVMSI) form a helical membrane-spanning segment. Topologically, residues 844 to 852 (ACFRWRMNK) are extracellular. A helical membrane pass occupies residues 853–873 (GLGFTMFLLYFAFVAVSLMFE). Residues 874–881 (YDVITCPF) lie on the Cytoplasmic side of the membrane.

This sequence belongs to the Ca(2+):cation antiporter (CaCA) (TC 2.A.19) family. SLC24A subfamily. In terms of tissue distribution, expressed in the adult nervous system. Expressed in the photoreceptor cells as well as in the lamina, medulla, and optic lobes of the brain.

The protein resides in the membrane. May function in the removal and maintenance of calcium homeostasis during signaling in the adult and in signaling events during embryogenesis and patterning of imaginal disks. Transports one Ca(2+) and 1 K(+) in exchange for 4 Na(+). This is Sodium/potassium/calcium exchanger Nckx30C (Nckx30C) from Drosophila melanogaster (Fruit fly).